The chain runs to 349 residues: Phosphate acetyltransferase (349 aa).

Belongs to the phosphate acetyltransferase and butyryltransferase family.

The protein resides in the cytoplasm. The enzyme catalyses acetyl-CoA + phosphate = acetyl phosphate + CoA. Its pathway is metabolic intermediate biosynthesis; acetyl-CoA biosynthesis; acetyl-CoA from acetate: step 2/2. The sequence is that of Phosphate acetyltransferase (pta) from Rickettsia typhi (strain ATCC VR-144 / Wilmington).